A 424-amino-acid polypeptide reads, in one-letter code: MTHALFSPFTIAGISHHTASVADMESVRFPDEEAFLTRAGDWFKGVILLQTCNRIEIMVHGNADLLGTFLESEGRAGWQMWKDADALSHLLDLAAGLDSMVIGEDQILGQLRKSLSLSESMSVADPLITLCINKAIHAGSEARRISGINRGAVSIGSAAVLLAEEQLGSLAGRHILVLGTGEMGVLVTQALAAKQLSAIYVANRTFDRAQCLAEKVHGTAVPMADLYRYLTMSDVIICCTAAPHPVIKVQEVMEALKGRSWPLDHSRRPLIIVDIAQPRDVEEDVGKIPGVCLYTIDDLRKVNDDTAQFRKEAAEKVREFLDQELVQFIRLFNRKAADELLATLHSWAEQIRIRERDRALSRLSGCDDRVRDVTDDLTRVLTRKLLTDVTLTIRTCAERGEMKIAEDLVGAITRGENICSRTYD.

Substrate is bound by residues 51 to 54 (TCNR), Ser-99, 104 to 106 (EDQ), and Gln-110. Cys-52 acts as the Nucleophile in catalysis. Position 179–184 (179–184 (GTGEMG)) interacts with NADP(+).

The protein belongs to the glutamyl-tRNA reductase family. In terms of assembly, homodimer.

It carries out the reaction (S)-4-amino-5-oxopentanoate + tRNA(Glu) + NADP(+) = L-glutamyl-tRNA(Glu) + NADPH + H(+). It participates in porphyrin-containing compound metabolism; protoporphyrin-IX biosynthesis; 5-aminolevulinate from L-glutamyl-tRNA(Glu): step 1/2. Functionally, catalyzes the NADPH-dependent reduction of glutamyl-tRNA(Glu) to glutamate 1-semialdehyde (GSA). The sequence is that of Glutamyl-tRNA reductase from Methanospirillum hungatei JF-1 (strain ATCC 27890 / DSM 864 / NBRC 100397 / JF-1).